A 459-amino-acid chain; its full sequence is ATP-dependent protease ATPase subunit HslU (459 aa).

ATP-binding positions include V18, 60–65, D272, E337, and R409; that span reads GVGKTE.

Belongs to the ClpX chaperone family. HslU subfamily. In terms of assembly, a double ring-shaped homohexamer of HslV is capped on each side by a ring-shaped HslU homohexamer. The assembly of the HslU/HslV complex is dependent on binding of ATP.

Its subcellular location is the cytoplasm. Its function is as follows. ATPase subunit of a proteasome-like degradation complex; this subunit has chaperone activity. The binding of ATP and its subsequent hydrolysis by HslU are essential for unfolding of protein substrates subsequently hydrolyzed by HslV. HslU recognizes the N-terminal part of its protein substrates and unfolds these before they are guided to HslV for hydrolysis. This is ATP-dependent protease ATPase subunit HslU from Thermoanaerobacter pseudethanolicus (strain ATCC 33223 / 39E) (Clostridium thermohydrosulfuricum).